We begin with the raw amino-acid sequence, 537 residues long: Frizzled-4 (537 aa).

Residues 1–36 form the signal peptide; the sequence is MAWRGAGPSVPGAPGGVGLSLGLLLQLLLLLGPARG. Residues 37-212 lie on the Extracellular side of the membrane; the sequence is FGDEEERRCD…KCGYDAGLYS (176 aa). Residues 40 to 161 form the FZ domain; that stretch reads EEERRCDPIR…NDHNHMCMEG (122 aa). 8 disulfide bridges follow: C45/C106, C53/C99, C90/C128, C117/C158, C121/C145, C181/C200, C204/C282, and C302/C377. N59 is a glycosylation site (N-linked (GlcNAc...) asparagine). N-linked (GlcNAc...) asparagine glycosylation occurs at N144. Residues 213 to 243 form a helical membrane-spanning segment; it reads RSAKEFTDIWMAVWASLCFISTAFTVLTFLI. Residues 244–249 are Cytoplasmic-facing; that stretch reads DSSRFS. Residues 250-275 traverse the membrane as a helical segment; the sequence is YPERPIIFLSMCYNIYSIAYIVRLTV. The Extracellular segment spans residues 276–299; that stretch reads GRERISCDFEEAAEPVLIQEGLKN. A helical membrane pass occupies residues 300–333; that stretch reads TGCAIIFLLMYFFGMASSIWWVILTLTWFLAAGL. Over 334–336 the chain is Cytoplasmic; it reads KWG. The chain crosses the membrane as a helical span at residues 337-365; that stretch reads HEAIEMHSSYFHIAAWAIPAVKTIVILIM. Over 366-383 the chain is Extracellular; that stretch reads RLVDADELTGLCYVGNQN. The chain crosses the membrane as a helical span at residues 384–418; the sequence is LDALTGFVVAPLFTYLVIGTLFIAAGLVALFKIRS. Topologically, residues 419–431 are cytoplasmic; sequence NLQKDGTKTDKLE. The helical transmembrane segment at 432–460 threads the bilayer; that stretch reads RLMVKIGVFSVLYTVPATCVIACYFYEIS. Over 461–473 the chain is Extracellular; the sequence is NWALFRYSADDSN. Residues 474 to 495 form a helical membrane-spanning segment; sequence MAVEMLKIFMSLLVGITSGMWI. The Cytoplasmic segment spans residues 496–537; the sequence is WSAKTLHTWQKCSNRLVNSGKVKREKRGNGWVKPGKGSETVV. The short motif at 499 to 504 is the Lys-Thr-X-X-X-Trp motif, mediates interaction with the PDZ domain of Dvl family members element; it reads KTLHTW. Residues 535-537 carry the PDZ-binding motif; it reads TVV.

This sequence belongs to the G-protein coupled receptor Fz/Smo family. In terms of assembly, interacts with MAGI3 and NDP. Component of a complex, at least composed of TSPAN12, FZD4 and norrin (NDP). Interacts (via FZ domain) with TSKU; TSKU competes with WNT2B for binding to FZD4, inhibiting Wnt signaling and repressing peripheral eye development. Interacts with glypican GPC3. Post-translationally, ubiquitinated by ZNRF3, leading to its degradation by the proteasome. In terms of tissue distribution, almost ubiquitous. Largely expressed in adult heart, skeletal muscle, ovary, and fetal kidney. Moderate amounts in adult liver, kidney, pancreas, spleen, and fetal lung, and small amounts in placenta, adult lung, prostate, testis, colon, fetal brain and liver.

It is found in the cell membrane. Receptor for Wnt proteins. Most frizzled receptors are coupled to the beta-catenin (CTNNB1) canonical signaling pathway, which leads to the activation of disheveled proteins, inhibition of GSK-3 kinase, nuclear accumulation of beta-catenin (CTNNB1) and activation of Wnt target genes. Plays a critical role in retinal vascularization by acting as a receptor for Wnt proteins and norrin (NDP). In retina, it can be activated by Wnt protein-binding and also by Wnt-independent signaling via binding of norrin (NDP), promoting in both cases beta-catenin (CTNNB1) accumulation and stimulation of LEF/TCF-mediated transcriptional programs. A second signaling pathway involving PKC and calcium fluxes has been seen for some family members, but it is not yet clear if it represents a distinct pathway or if it can be integrated in the canonical pathway, as PKC seems to be required for Wnt-mediated inactivation of GSK-3 kinase. Both pathways seem to involve interactions with G-proteins. May be involved in transduction and intercellular transmission of polarity information during tissue morphogenesis and/or in differentiated tissues. The protein is Frizzled-4 (FZD4) of Homo sapiens (Human).